The chain runs to 431 residues: F-box protein pof14 (431 aa).

In terms of domain architecture, F-box; atypical spans 172–186 (CPDEILQLIFSYCYD).

In terms of assembly, component of the E3 ubiquitin ligase Skp1-Cullin-1-F-box (SCF) complex. Interacts with skp1, cul1 and erg9.

It localises to the cytoplasm. The protein resides in the nucleus. Its subcellular location is the endoplasmic reticulum. Functionally, expression is induced during oxidative stress. Plays an essential, SCF-independent, role in the stress response to hydrogen peroxide for survival, by negatively regulating ergosterol synthesis via direct binding to the squalene synthase erg9. The sequence is that of F-box protein pof14 (pof14) from Schizosaccharomyces pombe (strain 972 / ATCC 24843) (Fission yeast).